The chain runs to 730 residues: 1,4-alpha-glucan branching enzyme GlgB (730 aa).

The active-site Nucleophile is the Asp405. The Proton donor role is filled by Glu458.

The protein belongs to the glycosyl hydrolase 13 family. GlgB subfamily. Monomer.

The catalysed reaction is Transfers a segment of a (1-&gt;4)-alpha-D-glucan chain to a primary hydroxy group in a similar glucan chain.. It participates in glycan biosynthesis; glycogen biosynthesis. In terms of biological role, catalyzes the formation of the alpha-1,6-glucosidic linkages in glycogen by scission of a 1,4-alpha-linked oligosaccharide from growing alpha-1,4-glucan chains and the subsequent attachment of the oligosaccharide to the alpha-1,6 position. This Haemophilus influenzae (strain 86-028NP) protein is 1,4-alpha-glucan branching enzyme GlgB.